Consider the following 278-residue polypeptide: Protoheme IX farnesyltransferase (278 aa).

The next 9 helical transmembrane spans lie at 12–32, 33–53, 83–103, 105–125, 130–150, 157–177, 204–224, 228–248, and 257–277; these read VIWL…QTVD, WSKL…SAAF, ALVY…YLLG, LPGL…TIWL, WLNI…GYAL, LPAV…IWAL, VIIS…YLAF, LLGL…SILA, and MWKM…ALVF.

Belongs to the UbiA prenyltransferase family. Protoheme IX farnesyltransferase subfamily.

The protein resides in the cell membrane. The catalysed reaction is heme b + (2E,6E)-farnesyl diphosphate + H2O = Fe(II)-heme o + diphosphate. It functions in the pathway porphyrin-containing compound metabolism; heme O biosynthesis; heme O from protoheme: step 1/1. Its function is as follows. Converts heme B (protoheme IX) to heme O by substitution of the vinyl group on carbon 2 of heme B porphyrin ring with a hydroxyethyl farnesyl side group. The chain is Protoheme IX farnesyltransferase from Pyrobaculum islandicum (strain DSM 4184 / JCM 9189 / GEO3).